The chain runs to 265 residues: MVTMKDLLECGVHFGHQTRRWNPKMKKFIFGVRKNIYIIDLQKTLRYFRYTYNVVRDRAAEGQTMIFVGTKKQASETIKKAAISCGMPYVNHRWLGGMLTNFGTIKKSIRKLEIIKKMREEGQLDLLTKKEALMLTRKEEKLELYLGGIKEMNKLPDMMFVLDAVKEKIAIQEARRLGITVVAPLDTNCDPDVVDLPIPGNDDAIRSIHLFCNEMAAAMNEGKAALADETGVEVEPISAEEKEELIAEAVAEGEEFNFAEEGENA.

This sequence belongs to the universal ribosomal protein uS2 family.

This chain is Small ribosomal subunit protein uS2, found in Aliarcobacter butzleri (strain RM4018) (Arcobacter butzleri).